Here is a 127-residue protein sequence, read N- to C-terminus: MPEVAVKGATISKKGFKKAVTKTQKKEGRKRKRCRKESYSIYIYKVLKQVHPDTGISSKAMSIMNSFVTDIFERIASEASRLAHYNKRSTITSREIQTAVRLLLPGELAKHAVSEGTKAVTKYTSSK.

At P2 the chain carries N-acetylproline. 7 positions are modified to N6-acetyllysine; alternate: K7, K13, K14, K17, K18, K22, and K25. An N6-crotonyllysine; alternate mark is found at K7, K13, K14, K17, K18, K22, K25, and K36. K7 and K13 each carry N6-lactoyllysine; alternate. K7 participates in a covalent cross-link: Glycyl lysine isopeptide (Lys-Gly) (interchain with G-Cter in SUMO2); alternate. N6-lactoyllysine; alternate is present on residues K17, K18, K22, and K25. A Glycyl lysine isopeptide (Lys-Gly) (interchain with G-Cter in SUMO2); alternate cross-link involves residue K22. K36 is subject to N6-succinyllysine; alternate. K36 participates in a covalent cross-link: Glycyl lysine isopeptide (Lys-Gly) (interchain with G-Cter in ubiquitin); alternate. S38 is modified (phosphoserine). K45 is subject to N6-lactoyllysine; alternate. K48 is subject to N6-methyllysine. K59 is subject to N6,N6-dimethyllysine. R81 is modified (dimethylated arginine). Position 87 is an N6-acetyllysine; alternate (K87). An N6-lactoyllysine; alternate modification is found at K87. K87 carries the N6,N6,N6-trimethyllysine; alternate modification. Omega-N-methylarginine is present on residues R88 and R94. K110 carries the N6-lactoyllysine; alternate modification. K110 bears the N6-methyllysine mark. T117 is subject to Phosphothreonine. K118 and K122 each carry N6-lactoyllysine; alternate. 2 positions are modified to N6-succinyllysine; alternate: K118 and K122. K118 carries the post-translational modification N6-methylated lysine; alternate. K122 is covalently cross-linked (Glycyl lysine isopeptide (Lys-Gly) (interchain with G-Cter in ubiquitin); alternate).

Belongs to the histone H2B family. As to quaternary structure, the nucleosome is a histone octamer containing two molecules each of H2A, H2B, H3 and H4 assembled in one H3-H4 heterotetramer and two H2A-H2B heterodimers. Interacts with H2AB1; preferentially dimerizes with H2AB1 to form nucleosomes. Post-translationally, monoubiquitination at Lys-36 by the MSL1/MSL2 dimer is required for histone H3 'Lys-4' (H3K4me) and 'Lys-79' (H3K79me) methylation and transcription activation at specific gene loci, such as HOXA9 and MEIS1 loci. Similarly, monoubiquitination of Lys-122 (H2BK120Ub) by the RNF20/40 complex gives a specific tag for epigenetic transcriptional activation and is also prerequisite for histone H3 'Lys-4' and 'Lys-79' methylation. It also functions cooperatively with the FACT dimer to stimulate elongation by RNA polymerase II. H2BK120Ub also acts as a regulator of mRNA splicing: deubiquitination by USP49 is required for efficient cotranscriptional splicing of a large set of exons. In terms of processing, crotonylation (Kcr) is specifically present in male germ cells and marks testis-specific genes in post-meiotic cells, including X-linked genes that escape sex chromosome inactivation in haploid cells. Crotonylation marks active promoters and enhancers and confers resistance to transcriptional repressors. It is also associated with post-meiotically activated genes on autosomes. Acetylated during spermatogenesis. Acetylated form is most abundant in spermatogonia compared to spermatocytes and round spermatids. Post-translationally, phosphorylated at Thr-117 in spermatogonia, spermatocytes and round spermatids. In terms of processing, methylated at Lys-118 in spermatogonia, spermatocytes and round spermatids. Lactylated in macrophages by EP300/P300 by using lactoyl-CoA directly derived from endogenous or exogenous lactate, leading to stimulates gene transcription. In terms of tissue distribution, mainly expressed in testis, and the corresponding protein is also present in mature sperm. Also present in metaphase oocytes (at protein level).

It is found in the nucleus. It localises to the chromosome. Variant histone specifically required to direct the transformation of dissociating nucleosomes to protamine in male germ cells. Entirely replaces classical histone H2B prior nucleosome to protamine transition and probably acts as a nucleosome dissociating factor that creates a more dynamic chromatin, facilitating the large-scale exchange of histones. In condensing spermatids, the heterodimer between H2AB1 and H2BC1/TH2B is loaded onto the nucleosomes and promotes loading of transition proteins (TNP1 and TNP2) onto the nucleosomes. Inclusion of the H2AB1-H2BC1/TH2B dimer into chromatin opens the nucleosomes, releasing the nucleosomal DNA ends and allowing the invasion of nucleosomes by transition proteins (TNP1 and TNP2). Then, transition proteins drive the recruitment and processing of protamines, which are responsible for histone eviction. Also expressed maternally and is present in the female pronucleus, suggesting a similar role in protamine replacement by nucleosomes at fertilization. Core component of nucleosome. Nucleosomes wrap and compact DNA into chromatin, limiting DNA accessibility to the cellular machineries which require DNA as a template. Histones thereby play a central role in transcription regulation, DNA repair, DNA replication and chromosomal stability. DNA accessibility is regulated via a complex set of post-translational modifications of histones, also called histone code, and nucleosome remodeling. The polypeptide is Histone H2B type 1-A (Mus musculus (Mouse)).